A 255-amino-acid chain; its full sequence is MDDKLIIGGREIISRLFIGTGKFPANRIIPDVVRMSGAQVVTVALRRIDFDSDEENMLRYIPKDCILMPNTSGARNAEEAVRIARLARASGCGNFIKIEVISDNRYLLPDNLETIKATEILVKEGFIVLPYMNPDLMDARRLKDAGAAAVMPLGAPIGTNKGLKTREMIKILIDEIDIPVIVDAGIGKPSDACEAMELGADAVLVNTAIATAGDPVVMAEAFANAVIAGRKAYLSGLGPVKEYAEASSPLTGFLR.

Lysine 97 serves as the catalytic Schiff-base intermediate with DXP. 1-deoxy-D-xylulose 5-phosphate contacts are provided by residues glycine 158, 184-185 (AG), and 206-207 (NT).

This sequence belongs to the ThiG family. As to quaternary structure, homotetramer. Forms heterodimers with either ThiH or ThiS.

The protein resides in the cytoplasm. The enzyme catalyses [ThiS sulfur-carrier protein]-C-terminal-Gly-aminoethanethioate + 2-iminoacetate + 1-deoxy-D-xylulose 5-phosphate = [ThiS sulfur-carrier protein]-C-terminal Gly-Gly + 2-[(2R,5Z)-2-carboxy-4-methylthiazol-5(2H)-ylidene]ethyl phosphate + 2 H2O + H(+). The protein operates within cofactor biosynthesis; thiamine diphosphate biosynthesis. In terms of biological role, catalyzes the rearrangement of 1-deoxy-D-xylulose 5-phosphate (DXP) to produce the thiazole phosphate moiety of thiamine. Sulfur is provided by the thiocarboxylate moiety of the carrier protein ThiS. In vitro, sulfur can be provided by H(2)S. This Acetivibrio thermocellus (strain ATCC 27405 / DSM 1237 / JCM 9322 / NBRC 103400 / NCIMB 10682 / NRRL B-4536 / VPI 7372) (Clostridium thermocellum) protein is Thiazole synthase.